A 307-amino-acid polypeptide reads, in one-letter code: Thymidylate synthase (307 aa).

A dUMP-binding site is contributed by R44. The residue at position 108 (S108) is a Phosphoserine. DUMP is bound by residues 169-170, 189-190, 209-212, N220, and 250-252; these read RR, CH, RSGD, and HIY. C189 serves as the catalytic Nucleophile. Position 212 (D212) interacts with (6R)-5,10-methylene-5,6,7,8-tetrahydrofolate. Residues K286 and K302 each participate in a glycyl lysine isopeptide (Lys-Gly) (interchain with G-Cter in SUMO2) cross-link. A306 provides a ligand contact to (6R)-5,10-methylene-5,6,7,8-tetrahydrofolate.

This sequence belongs to the thymidylate synthase family. In terms of assembly, homodimer.

It localises to the nucleus. The protein resides in the cytoplasm. It is found in the mitochondrion. Its subcellular location is the mitochondrion matrix. The protein localises to the mitochondrion inner membrane. The enzyme catalyses dUMP + (6R)-5,10-methylene-5,6,7,8-tetrahydrofolate = 7,8-dihydrofolate + dTMP. It functions in the pathway pyrimidine metabolism; dTTP biosynthesis. Functionally, catalyzes the reductive methylation of 2'-deoxyuridine 5'-monophosphate (dUMP) to thymidine 5'-monophosphate (dTMP), using the cosubstrate, 5,10- methylenetetrahydrofolate (CH2H4folate) as a 1-carbon donor and reductant and contributes to the de novo mitochondrial thymidylate biosynthesis pathway. This Mus musculus (Mouse) protein is Thymidylate synthase (Tyms).